Consider the following 237-residue polypeptide: uncharacterized protein (237 aa).

A divalent metal cation-binding residues include glutamate 91, glutamate 93, and aspartate 122.

The protein belongs to the FAH family.

This is an uncharacterized protein from Methanocaldococcus jannaschii (strain ATCC 43067 / DSM 2661 / JAL-1 / JCM 10045 / NBRC 100440) (Methanococcus jannaschii).